Consider the following 177-residue polypeptide: Large ribosomal subunit protein uL6 (177 aa).

The protein belongs to the universal ribosomal protein uL6 family. As to quaternary structure, part of the 50S ribosomal subunit.

In terms of biological role, this protein binds to the 23S rRNA, and is important in its secondary structure. It is located near the subunit interface in the base of the L7/L12 stalk, and near the tRNA binding site of the peptidyltransferase center. In Bordetella bronchiseptica (strain ATCC BAA-588 / NCTC 13252 / RB50) (Alcaligenes bronchisepticus), this protein is Large ribosomal subunit protein uL6.